The chain runs to 561 residues: Urocanate hydratase (561 aa).

NAD(+)-binding positions include G52–G53, Q130, G176–G178, E196, R201, N242–A243, Q263–H267, Y273–L274, and Y322. Residue C410 is part of the active site. Position 492 (G492) interacts with NAD(+).

The protein belongs to the urocanase family. NAD(+) is required as a cofactor.

The protein localises to the cytoplasm. It catalyses the reaction 4-imidazolone-5-propanoate = trans-urocanate + H2O. It participates in amino-acid degradation; L-histidine degradation into L-glutamate; N-formimidoyl-L-glutamate from L-histidine: step 2/3. Functionally, catalyzes the conversion of urocanate to 4-imidazolone-5-propionate. This chain is Urocanate hydratase, found in Salmonella typhi.